Reading from the N-terminus, the 769-residue chain is Polymeric immunoglobulin receptor (769 aa).

The N-terminal stretch at 1–18 is a signal peptide; the sequence is MRLSLFALLVTVFSGVST. Residues 19 to 643 lie on the Extracellular side of the membrane; that stretch reads QSPIFGPQDV…SAGGQSGSSK (625 aa). Residues 21-126 enclose the Ig-like V-type 1; required for binding to polymeric IgA and IgM domain; sequence PIFGPQDVSS…RGLFFDVSLE (106 aa). Cysteines 40 and 110 form a disulfide. 3 N-linked (GlcNAc...) asparagine glycosylation sites follow: Asn-90, Asn-135, and Asn-206. Ig-like V-type domains follow at residues 135 to 237, 240 to 341, 353 to 457, and 463 to 563; these read NDTH…DLQV, PEPE…VQAW, NSRS…LQVA, and PDLE…IYVA. 3 disulfides stabilise this stretch: Cys-152–Cys-220, Cys-257–Cys-324, and Cys-370–Cys-440. N-linked (GlcNAc...) asparagine glycosylation occurs at Asn-471. A disulfide bridge links Cys-484 with Cys-546. 2 disordered regions span residues 569-604 and 619-640; these read RGSPHINPTDANARAKDAPEEEAMESSVREDENKAN and AGDQAQENRASGNAGSAGGQSG. Positions 595–604 are enriched in basic and acidic residues; it reads SVREDENKAN. Residues 644-666 form a helical membrane-spanning segment; that stretch reads VLFSTLVPLGLVLAVGAVAVWVA. The Cytoplasmic segment spans residues 667-769; sequence RVRHRKNVDR…AQVHDGPQEA (103 aa). Phosphoserine is present on residues Ser-678, Ser-687, Ser-694, and Ser-740. Residues 719-741 are disordered; the sequence is EIETTTECTTEPEESKKAKRSSK. Residues 731–741 show a composition bias toward basic and acidic residues; the sequence is EESKKAKRSSK.

Interacts (mainly via CDR1-like domain) with dimeric IgA. Interacts (mainly via CDR2-like domain) with pentameric IgM. As to quaternary structure, either free or part of the secretory IgA (sIgA) complex that consists of two, four or five IgA monomers, and two additional non-Ig polypeptides, namely the JCHAIN and the secretory component (the proteolytic product of PIGR). Free secretory component interacts with bacterial antigens toxA of C.difficile and eae of E.coli. In terms of processing, N-glycosylated. N-glycosylation is required for anchoring IgA molecules to mucus, but is not necessary for Ig binding.

The protein localises to the cell membrane. It localises to the secreted. Mediates selective transcytosis of polymeric IgA and IgM across mucosal epithelial cells. Binds polymeric IgA and IgM at the basolateral surface of epithelial cells. The complex is then transported across the cell to be secreted at the apical surface. During this process, a cleavage occurs that separates the extracellular (known as the secretory component) from the transmembrane segment. Its function is as follows. Through its N-linked glycans ensures anchoring of secretory IgA (sIgA) molecules to mucus lining the epithelial surface to neutralize extracellular pathogens. On its own (free form) may act as a non-specific microbial scavenger to prevent pathogen interaction with epithelial cells. The protein is Polymeric immunoglobulin receptor (Pigr) of Rattus norvegicus (Rat).